Reading from the N-terminus, the 903-residue chain is Protein translocase subunit SecA (903 aa).

ATP-binding positions include Gln89, 107–111 (GEGKT), and Asp502. Zn(2+) contacts are provided by Cys887, Cys889, Cys898, and His899.

It belongs to the SecA family. As to quaternary structure, monomer and homodimer. Part of the essential Sec protein translocation apparatus which comprises SecA, SecYEG and auxiliary proteins SecDF-YajC and YidC. Zn(2+) serves as cofactor.

It localises to the cell inner membrane. The protein resides in the cytoplasm. It catalyses the reaction ATP + H2O + cellular proteinSide 1 = ADP + phosphate + cellular proteinSide 2.. Functionally, part of the Sec protein translocase complex. Interacts with the SecYEG preprotein conducting channel. Has a central role in coupling the hydrolysis of ATP to the transfer of proteins into and across the cell membrane, serving both as a receptor for the preprotein-SecB complex and as an ATP-driven molecular motor driving the stepwise translocation of polypeptide chains across the membrane. This is Protein translocase subunit SecA from Jannaschia sp. (strain CCS1).